The sequence spans 415 residues: Gamma-glutamyl phosphate reductase (415 aa).

It belongs to the gamma-glutamyl phosphate reductase family.

The protein resides in the cytoplasm. It carries out the reaction L-glutamate 5-semialdehyde + phosphate + NADP(+) = L-glutamyl 5-phosphate + NADPH + H(+). Its pathway is amino-acid biosynthesis; L-proline biosynthesis; L-glutamate 5-semialdehyde from L-glutamate: step 2/2. Its function is as follows. Catalyzes the NADPH-dependent reduction of L-glutamate 5-phosphate into L-glutamate 5-semialdehyde and phosphate. The product spontaneously undergoes cyclization to form 1-pyrroline-5-carboxylate. This is Gamma-glutamyl phosphate reductase from Clostridium perfringens (strain 13 / Type A).